We begin with the raw amino-acid sequence, 307 residues long: Quinolinate synthase (307 aa).

2 residues coordinate iminosuccinate: histidine 20 and serine 37. Position 82 (cysteine 82) interacts with [4Fe-4S] cluster. Residues 108–110 and serine 125 contribute to the iminosuccinate site; that span reads YIN. Residue cysteine 168 coordinates [4Fe-4S] cluster. Iminosuccinate contacts are provided by residues 194–196 and threonine 219; that span reads HPE. [4Fe-4S] cluster is bound at residue cysteine 264.

This sequence belongs to the quinolinate synthase family. Type 2 subfamily. The cofactor is [4Fe-4S] cluster.

It localises to the cytoplasm. It carries out the reaction iminosuccinate + dihydroxyacetone phosphate = quinolinate + phosphate + 2 H2O + H(+). It participates in cofactor biosynthesis; NAD(+) biosynthesis; quinolinate from iminoaspartate: step 1/1. In terms of biological role, catalyzes the condensation of iminoaspartate with dihydroxyacetone phosphate to form quinolinate. This is Quinolinate synthase from Pyrobaculum aerophilum (strain ATCC 51768 / DSM 7523 / JCM 9630 / CIP 104966 / NBRC 100827 / IM2).